We begin with the raw amino-acid sequence, 204 residues long: MAPSYKLTYCPVKALGEPIRFLLSYGEKDFEDYRFQEGDWPNLKPSMPFGKTPVLEIDGKQTHQSVAISRYLGKQFGLSGKDDWENLEIDMIVDTISDFRAAIANYHYDADENSKQKKWDPLKKETIPYYTKKFDEVVKANGGYLAAGKLTWADFYFVAILDYLNHMAKEDLVANQPNLKALREKVLGLPAIKAWVAKRPPTDL.

The region spanning 3–80 is the GST N-terminal domain; that stretch reads PSYKLTYCPV…YLGKQFGLSG (78 aa). Glutathione is bound by residues Tyr-9, Trp-40, Lys-44, 50 to 52, and 64 to 65; these read GKT and QS. The GST C-terminal domain occupies 82–204; sequence DDWENLEIDM…WVAKRPPTDL (123 aa).

Belongs to the GST superfamily. Sigma family.

It carries out the reaction RX + glutathione = an S-substituted glutathione + a halide anion + H(+). The polypeptide is Glutathione S-transferase (Blattella germanica (German cockroach)).